Reading from the N-terminus, the 238-residue chain is MGRKWANIVAKKTAKDGATSKVYAKFGVEIYVAAKQGEPDPELNTALKFVIDRAKQAQVPKHVIDKAIDKAKGNTDETFVEGRYEGFGPNGSMIIVDTLTSNVNRTAANVRTAYGKNGGNMGASGSVSYLFDKKGVIVFAGDDADSVFEQLLEADVDVDDVEAEEGTITVYTAPTDLHKGIQALRDNGVEEFQVTELEMIPQSEVVLEGDDLETFEKLIDALESDDDVQKVYHNVADL.

This sequence belongs to the TACO1 family. YeeN subfamily.

It is found in the cytoplasm. The polypeptide is Probable transcriptional regulatory protein M6_Spy0297 (Streptococcus pyogenes serotype M6 (strain ATCC BAA-946 / MGAS10394)).